Consider the following 1043-residue polypeptide: BAG family molecular chaperone regulator 6 (1043 aa).

Disordered regions lie at residues 253-294, 311-331, 343-366, 410-500, and 533-566; these read KEEL…GKTV, DVKEAQNQKNKEEPGQVPYPI, VEASESKESSNEGRNLESCPSDLH, NIPV…AESR, and SVESNSNLQEESNGEIIKPCEAKENREQPAKKSF. Composition is skewed to basic and acidic residues over residues 311 to 324, 343 to 357, 416 to 443, and 478 to 487; these read DVKEAQNQKNKEEP, VEASESKESSNEGRN, SENHLPKPTEPTKRIAKNEPVKSTKKEQ, and KRMEKSKETK. The segment covering 534–543 has biased composition (polar residues); sequence VESNSNLQEE. A compositionally biased stretch (basic and acidic residues) spans 550 to 566; that stretch reads KPCEAKENREQPAKKSF. The IQ domain maps to 568 to 597; sequence EEEAARIIQSMYRGYDVRRWEPIKKLKEIA. Positions 595–672 constitute a BAG domain; that stretch reads EIATVREQMG…SIQDKLDSLK (78 aa). A compositionally biased stretch (basic and acidic residues) spans 724–741; that stretch reads SPEEHPMSVLNRTDEKQA. Disordered stretches follow at residues 724-749, 764-799, 817-975, and 1015-1043; these read SPEEHPMSVLNRTDEKQAESAAETEE, ATENAAAASSTTIPEKIGEVETVVPGNPPSADGNGM, EPIN…ISKE, and EKKLSHKKKTQIRRRASKPMSVSPTDAVL. Low complexity predominate over residues 840–852; the sequence is ASEVSEAETNSSE. A compositionally biased stretch (basic and acidic residues) spans 853–871; that stretch reads NENRKGEDDIVLHSEKNVE. 2 stretches are compositionally biased toward polar residues: residues 885 to 899 and 919 to 932; these read QPLSQDPSSSYTREG and SPNNSKGIGQQTSE. Basic and acidic residues predominate over residues 934–951; that stretch reads QDEKEQSPETEVIVKEQP. The stretch at 971 to 1024 forms a coiled coil; the sequence is GISKETKKLMEENQRFKETMETLVKAGREQLEVISKLTSRVKSLEKKLSHKKKT. Residues 1018-1031 are compositionally biased toward basic residues; the sequence is LSHKKKTQIRRRAS. The segment covering 1034-1043 has biased composition (polar residues); that stretch reads MSVSPTDAVL.

In terms of assembly, binds to the ATPase domain of HSP70/HSC70 chaperones. Interacts with calmodulins CAM1, CAM2, CAM3, CAM4, CAM6 and CAM7. Interacts with BAGP1 and APCB1. Detected in stems, leaves, flowers and roots.

Functionally, co-chaperone that regulates diverse cellular pathways, such as programmed cell death and stress responses. Involved in plant basal resistance. Involved in basal heat response through the regulation of the heat induced small HSP (sHSP) transcriptional cascade. In terms of biological role, induces autophagy. This is BAG family molecular chaperone regulator 6 from Arabidopsis thaliana (Mouse-ear cress).